The following is a 565-amino-acid chain: Proline--tRNA ligase (565 aa).

It belongs to the class-II aminoacyl-tRNA synthetase family. ProS type 1 subfamily. In terms of assembly, homodimer.

The protein localises to the cytoplasm. It carries out the reaction tRNA(Pro) + L-proline + ATP = L-prolyl-tRNA(Pro) + AMP + diphosphate. Catalyzes the attachment of proline to tRNA(Pro) in a two-step reaction: proline is first activated by ATP to form Pro-AMP and then transferred to the acceptor end of tRNA(Pro). As ProRS can inadvertently accommodate and process non-cognate amino acids such as alanine and cysteine, to avoid such errors it has two additional distinct editing activities against alanine. One activity is designated as 'pretransfer' editing and involves the tRNA(Pro)-independent hydrolysis of activated Ala-AMP. The other activity is designated 'posttransfer' editing and involves deacylation of mischarged Ala-tRNA(Pro). The misacylated Cys-tRNA(Pro) is not edited by ProRS. This is Proline--tRNA ligase from Bacillus pumilus (strain SAFR-032).